The primary structure comprises 73 residues: Putative antitoxin VapB38 (73 aa).

Probable antitoxin component of a type II toxin-antitoxin (TA) system. Its putative cognate toxin is VapC38. The chain is Putative antitoxin VapB38 (vapB38) from Mycobacterium tuberculosis (strain ATCC 25618 / H37Rv).